Consider the following 152-residue polypeptide: Aspartate carbamoyltransferase regulatory chain (152 aa).

Zn(2+) contacts are provided by C108, C113, C136, and C139.

Belongs to the PyrI family. As to quaternary structure, contains catalytic and regulatory chains. Requires Zn(2+) as cofactor.

Involved in allosteric regulation of aspartate carbamoyltransferase. The sequence is that of Aspartate carbamoyltransferase regulatory chain from Pyrococcus furiosus (strain ATCC 43587 / DSM 3638 / JCM 8422 / Vc1).